Here is a 174-residue protein sequence, read N- to C-terminus: D(1B) dopamine receptor (174 aa).

The chain crosses the membrane as a helical span at residues 1 to 10 (SILNLCIISV). Over 11-32 (DRYWAISRPFCYERKMTQRVAL) the chain is Cytoplasmic. The chain crosses the membrane as a helical span at residues 33 to 54 (VMVGLAWTLSILISFIPVQLHW). Topologically, residues 55-96 (HRDKVGSRDGLDPPSNLANGTPWEEAGESDRSAENCDSSLNR) are extracellular. Residues 64–88 (GLDPPSNLANGTPWEEAGESDRSAE) are disordered. N-linked (GlcNAc...) asparagine glycosylation occurs at N95. Residues 97–119 (TYAISSSLISFYIPVAIMIVTYT) traverse the membrane as a helical segment. At 120 to 169 (RIYRIAQVQIRRISSLERAAEHAQSCRSREACAPDSGLRASIKKETKVLK) the chain is on the cytoplasmic side. Residues 170-174 (TLSVI) traverse the membrane as a helical segment.

This sequence belongs to the G-protein coupled receptor 1 family.

The protein localises to the cell membrane. In terms of biological role, dopamine receptor whose activity is mediated by G proteins which activate adenylyl cyclase. This is D(1B) dopamine receptor (DRD5) from Bos taurus (Bovine).